Reading from the N-terminus, the 424-residue chain is Glutamyl-tRNA(Gln) amidotransferase subunit D (424 aa).

The interval 56–78 (GETANGSRNGGKGCKTNEEELPE) is disordered. The Asparaginase/glutaminase domain maps to 84-413 (PKIAILSTGG…EKAAGMLRED (330 aa)). Catalysis depends on residues Thr-94, Thr-170, Asp-171, and Lys-247.

It belongs to the asparaginase 1 family. GatD subfamily. Heterodimer of GatD and GatE.

It carries out the reaction L-glutamyl-tRNA(Gln) + L-glutamine + ATP + H2O = L-glutaminyl-tRNA(Gln) + L-glutamate + ADP + phosphate + H(+). Functionally, allows the formation of correctly charged Gln-tRNA(Gln) through the transamidation of misacylated Glu-tRNA(Gln) in organisms which lack glutaminyl-tRNA synthetase. The reaction takes place in the presence of glutamine and ATP through an activated gamma-phospho-Glu-tRNA(Gln). The GatDE system is specific for glutamate and does not act on aspartate. The protein is Glutamyl-tRNA(Gln) amidotransferase subunit D of Methanosarcina acetivorans (strain ATCC 35395 / DSM 2834 / JCM 12185 / C2A).